The chain runs to 796 residues: Peroxisome proliferator-activated receptor gamma coactivator 1-alpha (796 aa).

The residue at position 77 (lysine 77) is an N6-acetyllysine. The disordered stretch occupies residues 98–138 (PVDEDGLPSFDALTDGDVTTENEASPSSMPDGTPPPQEAEE). Positions 114–127 (DVTTENEASPSSMP) are enriched in polar residues. Positions 142 to 146 (LKKLL) match the LXXLL motif motif. Position 144 is an N6-acetyllysine (lysine 144). Position 176 is a phosphothreonine; by AMPK (threonine 176). Lysine 182 bears the N6-acetyllysine mark. The tract at residues 211-275 (YLTTNDDPPH…NDPKGSPFEN (65 aa)) is disordered. Residues 217–235 (DPPHTKPTENRNSSRDKCT) show a composition bias toward basic and acidic residues. A compositionally biased stretch (polar residues) spans 242 to 258 (TQSQTQHLQAKPTTLSL). Residues lysine 252, lysine 269, lysine 276, and lysine 319 each carry the N6-acetyllysine modification. Disordered regions lie at residues 288-374 (GTAG…AKRP) and 398-452 (TSQE…RKQL). The segment at 291 to 337 (GLTPPTTPPHKANQDNPFRASPKLKPSCKTVVPPPSKKARYSESSCT) is interaction with PPARG. Residues 332 to 344 (SESSCTQGSNSTK) are compositionally biased toward polar residues. N6-acetyllysine occurs at positions 345 and 411. The tract at residues 348 to 796 (EQSELYAQLS…LKEAQRSLRR (449 aa)) is mediates interaction with RNF34. A compositionally biased stretch (basic and acidic residues) spans 401-412 (ELHDSRQLENKD). 2 stretches are compositionally biased toward polar residues: residues 413-428 (APSS…STDS) and 439-450 (VSRQVSPGSTRK). Residue lysine 450 is modified to N6-acetyllysine. Serine 538 carries the post-translational modification Phosphoserine; by AMPK. 3 disordered regions span residues 542 to 597 (FNSP…SSSR), 609 to 637 (HRTH…SYEE), and 648 to 667 (YRRE…ERQR). Residues 562-577 (QRMRSRSRSFSRHRSC) are compositionally biased toward basic residues. Over residues 578–597 (SRSPYSRSRSRSPGSRSSSR) the composition is skewed to low complexity. In terms of domain architecture, RRM spans 675 to 751 (RVIYVGKIRP…TDFELYFCGR (77 aa)). Lysine 756 and lysine 777 each carry N6-acetyllysine.

As to quaternary structure, homooligomer. Interacts with MYBBP1A; inhibits MYBBP1A transcriptional activation. Interacts with PRDM16, LPIN1 and PML. Interacts (via LXXLL motif) with RORA and RORC (via AF-2 motif); activates RORA and RORC transcriptional activation. Interacts with LRPPRC. Interacts with FOXO1. Interacts with NR5A2. In terms of processing, phosphorylation by AMPK in skeletal muscle increases activation of its own promoter. Phosphorylated by CLK2. Heavily acetylated by KAT2A/GCN5 under conditions of high nutrients, leading to inactivation of PPARGC1A. Deacetylated by SIRT1 in low nutrients/high NAD conditions, leading to its activation. Post-translationally, ubiquitinated. Ubiquitination by RNF34 induces proteasomal degradation.

It localises to the nucleus. Its subcellular location is the PML body. Its function is as follows. Transcriptional coactivator for steroid receptors and nuclear receptors. Greatly increases the transcriptional activity of PPARG and thyroid hormone receptor on the uncoupling protein promoter. Can regulate key mitochondrial genes that contribute to the program of adaptive thermogenesis. Plays an essential role in metabolic reprogramming in response to dietary availability through coordination of the expression of a wide array of genes involved in glucose and fatty acid metabolism. Acts as a key regulator of gluconeogenesis: stimulates hepatic gluconeogenesis by increasing the expression of gluconeogenic enzymes, and acting together with FOXO1 to promote the fasting gluconeogenic program. Induces the expression of PERM1 in the skeletal muscle in an ESRRA-dependent manner. Also involved in the integration of the circadian rhythms and energy metabolism. Required for oscillatory expression of clock genes, such as BMAL1 and NR1D1, through the coactivation of RORA and RORC, and metabolic genes, such as PDK4 and PEPCK. The chain is Peroxisome proliferator-activated receptor gamma coactivator 1-alpha (PPARGC1A) from Bos taurus (Bovine).